The chain runs to 204 residues: Cytochrome b6 (204 aa).

Residues 23–43 (YCLGGITLTSFLVQVATGSAM) form a helical membrane-spanning segment. A heme c-binding site is contributed by Cys24. Heme b contacts are provided by His75 and His89. The next 3 membrane-spanning stretches (helical) occupy residues 81-101 (MMVL…GFKK), 107-127 (WVTG…GYSL), and 136-157 (AVKI…LVEL). Heme b contacts are provided by His176 and His191. A helical transmembrane segment spans residues 177-197 (TFILPLLTAVFMPMHFLMIRK).

The protein belongs to the cytochrome b family. PetB subfamily. In terms of assembly, the 4 large subunits of the cytochrome b6-f complex are cytochrome b6, subunit IV (17 kDa polypeptide, PetD), cytochrome f and the Rieske protein, while the 4 small subunits are PetG, PetL, PetM and PetN. The complex functions as a dimer. The cofactor is heme b. Requires heme c as cofactor.

It localises to the plastid. Its subcellular location is the chloroplast thylakoid membrane. Functionally, component of the cytochrome b6-f complex, which mediates electron transfer between photosystem II (PSII) and photosystem I (PSI), cyclic electron flow around PSI, and state transitions. This Picea abies (Norway spruce) protein is Cytochrome b6.